We begin with the raw amino-acid sequence, 115 residues long: Promotilin (115 aa).

The signal sequence occupies residues 1-25 (MLSRKATAVLLAVHAAAMLASQTEA). Residues 43–72 (RYKGQKKSLSVQQRSEEVGPVDPTEPWEEK) form a disordered region.

This sequence belongs to the motilin family.

The protein resides in the secreted. In terms of biological role, plays an important role in the regulation of interdigestive gastrointestinal motility and indirectly causes rhythmic contraction of duodenal and colonic smooth muscle. This chain is Promotilin (MLN), found in Bos taurus (Bovine).